Here is a 620-residue protein sequence, read N- to C-terminus: Glutathione-regulated potassium-efflux system protein KefC (620 aa).

The next 12 membrane-spanning stretches (helical) occupy residues 4 to 24, 26 to 46, 54 to 74, 90 to 110, 114 to 134, 149 to 169, 178 to 198, 218 to 238, 270 to 290, 294 to 314, 327 to 347, and 359 to 379; these read HTLI…PIAV, LGLG…PWGL, SILH…GLEL, GALQ…LLGL, VAEL…MQAM, FAVL…IPLL, MGAF…VVLL, VFSA…EEVG, GLLL…GTLL, LRIV…LWLI, WFAV…GTAQ, and SLTL…VILN. Residues 399–518 form the RCK N-terminal domain; it reads QPRVIIAGFG…AGVEKPERET (120 aa). A disordered region spans residues 597 to 620; that stretch reads GWQGTEEGKHTGNMADEPETKPSS.

It belongs to the monovalent cation:proton antiporter 2 (CPA2) transporter (TC 2.A.37) family. KefC subfamily. As to quaternary structure, homodimer. Interacts with the regulatory subunit KefF.

Its subcellular location is the cell inner membrane. In terms of biological role, pore-forming subunit of a potassium efflux system that confers protection against electrophiles. Catalyzes K(+)/H(+) antiport. The sequence is that of Glutathione-regulated potassium-efflux system protein KefC from Shigella sonnei (strain Ss046).